The chain runs to 483 residues: Regulatory protein ViaA (483 aa).

Belongs to the ViaA family. Homodimer. Interacts with RavA.

The protein resides in the cytoplasm. In terms of biological role, component of the RavA-ViaA chaperone complex, which may act on the membrane to optimize the function of some of the respiratory chains. ViaA stimulates the ATPase activity of RavA. This chain is Regulatory protein ViaA, found in Salmonella heidelberg (strain SL476).